The following is a 183-amino-acid chain: MSDWQTVRTWLAGTYSNRAQAMAEPVWFIPVTLWYVEVAGLFGEGAGFFTEQVSEHTPNQPYRSRVLQLLDNPLRLENYRLKDQKVWAGAAKDPERLGRLRADDCEQLPGCTLYLERRGETFTGKMQPGGGCRLFPGDASYVEIEFELGERLFFTLDRGFEATTGEQTWGSRAGAYRYLKQLH.

The protein belongs to the CpcT/CpeT biliprotein lyase family.

Its function is as follows. Covalently attaches a chromophore to Cys residue(s) of phycobiliproteins. The protein is Chromophore lyase CpcT/CpeT 4 of Gloeobacter violaceus (strain ATCC 29082 / PCC 7421).